Reading from the N-terminus, the 370-residue chain is 3-dehydroquinate synthase (370 aa).

NAD(+) is bound by residues 108–112 (GVIGD), 132–133 (TT), Lys-145, and Lys-154. Positions 187, 249, and 267 each coordinate Zn(2+).

The protein belongs to the sugar phosphate cyclases superfamily. Dehydroquinate synthase family. The cofactor is Co(2+). Requires Zn(2+) as cofactor. It depends on NAD(+) as a cofactor.

The protein localises to the cytoplasm. It carries out the reaction 7-phospho-2-dehydro-3-deoxy-D-arabino-heptonate = 3-dehydroquinate + phosphate. It functions in the pathway metabolic intermediate biosynthesis; chorismate biosynthesis; chorismate from D-erythrose 4-phosphate and phosphoenolpyruvate: step 2/7. Its function is as follows. Catalyzes the conversion of 3-deoxy-D-arabino-heptulosonate 7-phosphate (DAHP) to dehydroquinate (DHQ). This Cereibacter sphaeroides (strain KD131 / KCTC 12085) (Rhodobacter sphaeroides) protein is 3-dehydroquinate synthase.